The sequence spans 55 residues: UPF0391 membrane protein Neut_2351/Neut_2360 (55 aa).

The next 2 membrane-spanning stretches (helical) occupy residues 4 to 24 (LAVV…TGVA) and 28 to 48 (AEMA…FWVL).

This sequence belongs to the UPF0391 family.

Its subcellular location is the cell membrane. This Nitrosomonas eutropha (strain DSM 101675 / C91 / Nm57) protein is UPF0391 membrane protein Neut_2351/Neut_2360.